The sequence spans 514 residues: AAA-ATPase ASD, mitochondrial (514 aa).

A helical transmembrane segment spans residues 7–24; the sequence is VWTNTGSALASLVFIYTI. 250-257 serves as a coordination point for ATP; that stretch reads GPPGTGKS. 2 disordered regions span residues 311 to 342 and 467 to 514; these read GQRK…ENKG and KEEA…TMKD. Basic and acidic residues-rich tracts occupy residues 331–342 and 467–502; these read KQMKKDQGENKG and KEEA…KEEK.

The protein belongs to the AAA ATPase family. BCS1 subfamily. Mg(2+) serves as cofactor. As to expression, expressed in seeds, specifically in the embryo.

It localises to the mitochondrion membrane. The catalysed reaction is ATP + H2O = ADP + phosphate + H(+). Its function is as follows. Required to regulate morphology and anatomy during seed maturation. The polypeptide is AAA-ATPase ASD, mitochondrial (AATP1) (Arabidopsis thaliana (Mouse-ear cress)).